Reading from the N-terminus, the 191-residue chain is Large ribosomal subunit protein bL9 (191 aa).

The tract at residues glutamate 150 to glutamate 191 is disordered. Residues phenylalanine 179–glutamate 191 are compositionally biased toward acidic residues.

It belongs to the bacterial ribosomal protein bL9 family.

Binds to the 23S rRNA. This Allorhizobium ampelinum (strain ATCC BAA-846 / DSM 112012 / S4) (Agrobacterium vitis (strain S4)) protein is Large ribosomal subunit protein bL9.